A 400-amino-acid polypeptide reads, in one-letter code: Enoyl-[acyl-carrier-protein] reductase [NADH] (400 aa).

Residues 48-53 (GASTGY), 74-75 (FE), 111-112 (DA), and 139-140 (LA) contribute to the NAD(+) site. Tyr-225 contributes to the substrate binding site. Tyr-235 (proton donor) is an active-site residue. NAD(+) is bound by residues Lys-244 and 273-275 (VVT).

Belongs to the TER reductase family. In terms of assembly, monomer.

It catalyses the reaction a 2,3-saturated acyl-[ACP] + NAD(+) = a (2E)-enoyl-[ACP] + NADH + H(+). The protein operates within lipid metabolism; fatty acid biosynthesis. Functionally, involved in the final reduction of the elongation cycle of fatty acid synthesis (FAS II). Catalyzes the reduction of a carbon-carbon double bond in an enoyl moiety that is covalently linked to an acyl carrier protein (ACP). The chain is Enoyl-[acyl-carrier-protein] reductase [NADH] from Burkholderia vietnamiensis (strain G4 / LMG 22486) (Burkholderia cepacia (strain R1808)).